A 124-amino-acid chain; its full sequence is Small ribosomal subunit protein uS12 (124 aa).

At Asp-89 the chain carries 3-methylthioaspartic acid.

Belongs to the universal ribosomal protein uS12 family. As to quaternary structure, part of the 30S ribosomal subunit. Contacts proteins S8 and S17. May interact with IF1 in the 30S initiation complex.

Its function is as follows. With S4 and S5 plays an important role in translational accuracy. Interacts with and stabilizes bases of the 16S rRNA that are involved in tRNA selection in the A site and with the mRNA backbone. Located at the interface of the 30S and 50S subunits, it traverses the body of the 30S subunit contacting proteins on the other side and probably holding the rRNA structure together. The combined cluster of proteins S8, S12 and S17 appears to hold together the shoulder and platform of the 30S subunit. In Pectobacterium atrosepticum (strain SCRI 1043 / ATCC BAA-672) (Erwinia carotovora subsp. atroseptica), this protein is Small ribosomal subunit protein uS12.